A 334-amino-acid chain; its full sequence is Tryptophan--tRNA ligase (334 aa).

ATP contacts are provided by residues 11-13 (QPS) and 19-20 (GN). The 'HIGH' region motif lies at 12–20 (PSGELTIGN). Asp-135 is an L-tryptophan binding site. Residues 147–149 (GED), Val-186, and 195–199 (KMSKS) contribute to the ATP site. The 'KMSKS' region signature appears at 195–199 (KMSKS).

This sequence belongs to the class-I aminoacyl-tRNA synthetase family. In terms of assembly, homodimer.

The protein resides in the cytoplasm. The enzyme catalyses tRNA(Trp) + L-tryptophan + ATP = L-tryptophyl-tRNA(Trp) + AMP + diphosphate + H(+). Its function is as follows. Catalyzes the attachment of tryptophan to tRNA(Trp). The sequence is that of Tryptophan--tRNA ligase from Klebsiella aerogenes (Enterobacter aerogenes).